A 445-amino-acid chain; its full sequence is Tubulin beta-2A chain (445 aa).

The MREI motif signature appears at 1–4; that stretch reads MREI. Residue Gln11 coordinates GTP. The residue at position 40 (Ser40) is a Phosphoserine. Lys58 is modified (N6-acetyllysine; alternate). Lys58 is subject to N6-succinyllysine; alternate. A Glycyl lysine isopeptide (Lys-Gly) (interchain with G-Cter in ubiquitin); alternate cross-link involves residue Lys58. Positions 69, 138, 142, 143, and 144 each coordinate GTP. Mg(2+) is bound at residue Glu69. Ser172 carries the phosphoserine; by CDK1 modification. Residues Asn204 and Asn226 each contribute to the GTP site. Phosphothreonine occurs at positions 285 and 290. Omega-N-methylarginine is present on Arg318. Lys324 is covalently cross-linked (Glycyl lysine isopeptide (Lys-Gly) (interchain with G-Cter in ubiquitin)). The tract at residues 422–445 is disordered; it reads YQQYQDATADEQGEFEEEEGEDEA. The segment covering 429 to 445 has biased composition (acidic residues); the sequence is TADEQGEFEEEEGEDEA. Glu438 carries the post-translational modification 5-glutamyl polyglutamate.

Belongs to the tubulin family. As to quaternary structure, interacts with ZNRF1. Part of a complex composed at least of ASH2L, EMSY, HCFC1, HSPA8, CCAR2, MATR3, MKI67, RBBP5, TUBB2A, WDR5 and ZNF335; this complex may have a histone H3-specific methyltransferase activity. Dimer of alpha and beta chains. A typical microtubule is a hollow water-filled tube with an outer diameter of 25 nm and an inner diameter of 15 nM. Alpha-beta heterodimers associate head-to-tail to form protofilaments running lengthwise along the microtubule wall with the beta-tubulin subunit facing the microtubule plus end conferring a structural polarity. Microtubules usually have 13 protofilaments but different protofilament numbers can be found in some organisms and specialized cells. Requires Mg(2+) as cofactor. Some glutamate residues at the C-terminus are polyglutamylated, resulting in polyglutamate chains on the gamma-carboxyl group. Polyglutamylation plays a key role in microtubule severing by spastin (SPAST). SPAST preferentially recognizes and acts on microtubules decorated with short polyglutamate tails: severing activity by SPAST increases as the number of glutamates per tubulin rises from one to eight, but decreases beyond this glutamylation threshold. Glutamylation is also involved in cilia motility. Post-translationally, some glutamate residues at the C-terminus are monoglycylated but not polyglycylated due to the absence of functional TTLL10 in human. Monoglycylation is mainly limited to tubulin incorporated into cilia and flagella axonemes, which is required for their stability and maintenance. Flagella glycylation controls sperm motility. Both polyglutamylation and monoglycylation can coexist on the same protein on adjacent residues, and lowering glycylation levels increases polyglutamylation, and reciprocally. In terms of processing, phosphorylated on Ser-172 by CDK1 during the cell cycle, from metaphase to telophase, but not in interphase. This phosphorylation inhibits tubulin incorporation into microtubules. In terms of tissue distribution, high expression in brain, where it represents 30% of all beta-tubulins.

It is found in the cytoplasm. The protein localises to the cytoskeleton. Functionally, tubulin is the major constituent of microtubules, a cylinder consisting of laterally associated linear protofilaments composed of alpha- and beta-tubulin heterodimers. Microtubules grow by the addition of GTP-tubulin dimers to the microtubule end, where a stabilizing cap forms. Below the cap, tubulin dimers are in GDP-bound state, owing to GTPase activity of alpha-tubulin. The protein is Tubulin beta-2A chain (TUBB2A) of Homo sapiens (Human).